Consider the following 556-residue polypeptide: MPTVDDVLEQVGEFGWFQKQAFLLLCLISASLAPIYVGIVFLGFTPGHYCQNPGVAELSQRCGWSQAEELNYTVPGLGPSDEASFLSQCMRYEVDWNQSTLDCVDPLSSLVANRSQLPLGPCEHGWVYDTPGSSIVTEFNLVCGDAWKVDLFQSCVNLGFFLGSLVVGYIADRFGRKLCLLVTTLVTSVSGVLTAVAPDYTSMLLFRLLQGMVSKGSWVSGYTLITEFVGSGYRRTTAILYQMAFTVGLVGLAGVAYAIPDWRWLQLAVSLPTFLFLLYYWFVPESPRWLLSQKRTTRAVRIMEQIAQKNGKVPPADLKMLCLEEDASEKRSPSFADLFRTPNLRKHTVILMYLWFSCAVLYQGLIMHVGATGANLYLDFFYSSLVEFPAAFIILVTIDRIGRIYPIAASNLVTGAACLLMIFIPHELHWLNVTLACLGRMGATIVLQMVCLVNAELYPTFIRNLGMMVCSALCDLGGIFTPFMVFRLMEVWQALPLILFGVLGLTAGAMTLLLPETKGVALPETIEEAENLGRRKSKAKENTIYLQVQTGKSSST.

Residues 1–21 (MPTVDDVLEQVGEFGWFQKQA) are Cytoplasmic-facing. The chain crosses the membrane as a helical span at residues 22–42 (FLLLCLISASLAPIYVGIVFL). Topologically, residues 43–150 (GFTPGHYCQN…LVCGDAWKVD (108 aa)) are extracellular. N-linked (GlcNAc...) asparagine glycosylation occurs at N71. Residues 151-171 (LFQSCVNLGFFLGSLVVGYIA) traverse the membrane as a helical segment. At 172-177 (DRFGRK) the chain is on the cytoplasmic side. A helical membrane pass occupies residues 178-198 (LCLLVTTLVTSVSGVLTAVAP). Topologically, residues 199–211 (DYTSMLLFRLLQG) are extracellular. The helical transmembrane segment at 212–231 (MVSKGSWVSGYTLITEFVGS) threads the bilayer. The Cytoplasmic segment spans residues 232-238 (GYRRTTA). Residues 239 to 259 (ILYQMAFTVGLVGLAGVAYAI) traverse the membrane as a helical segment. Residues 260–263 (PDWR) are Extracellular-facing. Residues 264 to 284 (WLQLAVSLPTFLFLLYYWFVP) form a helical membrane-spanning segment. A Proline-rich sequence motif is present at residues 284–288 (PESPR). At 285 to 348 (ESPRWLLSQK…FRTPNLRKHT (64 aa)) the chain is on the cytoplasmic side. S334 is modified (phosphoserine). Residues 349–369 (VILMYLWFSCAVLYQGLIMHV) traverse the membrane as a helical segment. Topologically, residues 370–377 (GATGANLY) are extracellular. A helical membrane pass occupies residues 378 to 398 (LDFFYSSLVEFPAAFIILVTI). Topologically, residues 399 to 403 (DRIGR) are cytoplasmic. The helical transmembrane segment at 404–424 (IYPIAASNLVTGAACLLMIFI) threads the bilayer. Residues 425-429 (PHELH) are Extracellular-facing. A helical membrane pass occupies residues 430 to 452 (WLNVTLACLGRMGATIVLQMVCL). The Cytoplasmic portion of the chain corresponds to 453 to 465 (VNAELYPTFIRNL). A helical transmembrane segment spans residues 466–486 (GMMVCSALCDLGGIFTPFMVF). Residues 487 to 493 (RLMEVWQ) are Extracellular-facing. The helical transmembrane segment at 494–514 (ALPLILFGVLGLTAGAMTLLL) threads the bilayer. At 515 to 556 (PETKGVALPETIEEAENLGRRKSKAKENTIYLQVQTGKSSST) the chain is on the cytoplasmic side. The residue at position 543 (T543) is a Phosphothreonine.

The protein belongs to the major facilitator (TC 2.A.1) superfamily. Organic cation transporter (TC 2.A.1.19) family. In terms of processing, phosphorylated. Expressed in kidney cortex in S1, S2 segments of renal proximal tubules as well as in kidney medulla. Expressed throughout the liver lobuli, in hepatocytes surrounding the central veins. Expressed in enterocytes of villi and crypts in small intestine. Expressed in brain, in some white matter regions like the corpus callosum and in the granular layer of the cerebellum. Expressed in Sertoli cells in testis. Expressed in colon. Expressed in tracheal and bronchial ciliated epithelium in the respiratory tract. Expressed in spleen, moderately in skin, and weakly in the gastrointestinal tract, lung, thymus, muscle, and prostate. In terms of tissue distribution, expressed in kidney cortex and medulla. Expressed in intestine, liver and colon.

It localises to the basolateral cell membrane. Its subcellular location is the apical cell membrane. The protein resides in the lateral cell membrane. It is found in the basal cell membrane. The protein localises to the cell membrane. The enzyme catalyses 1-methylnicotinamide(out) = 1-methylnicotinamide(in). The catalysed reaction is dopamine(out) = dopamine(in). It carries out the reaction serotonin(out) = serotonin(in). It catalyses the reaction (R)-adrenaline(out) = (R)-adrenaline(in). The enzyme catalyses (R)-noradrenaline(out) = (R)-noradrenaline(in). The catalysed reaction is histamine(out) = histamine(in). It carries out the reaction guanidine(out) = guanidine(in). It catalyses the reaction choline(out) = choline(in). The enzyme catalyses acetylcholine(in) = acetylcholine(out). The catalysed reaction is thiamine(in) = thiamine(out). It carries out the reaction agmatine(out) = agmatine(in). It catalyses the reaction putrescine(out) = putrescine(in). The enzyme catalyses spermidine(in) = spermidine(out). The catalysed reaction is (R)-carnitine(in) = (R)-carnitine(out). It carries out the reaction O-isobutanoyl-(R)-carnitine(in) = O-isobutanoyl-(R)-carnitine(out). It catalyses the reaction O-acetyl-(R)-carnitine(in) = O-acetyl-(R)-carnitine(out). The enzyme catalyses O-3-hydroxybutanoyl-(R)-carnitine(in) = O-3-hydroxybutanoyl-(R)-carnitine(out). The catalysed reaction is O-propanoyl-(R)-carnitine(in) = O-propanoyl-(R)-carnitine(out). It carries out the reaction O-butanoyl-(R)-carnitine(in) = O-butanoyl-(R)-carnitine(out). It catalyses the reaction O-2-methylbutanoyl-(R)-carnitine(in) = O-2-methylbutanoyl-(R)-carnitine(out). The enzyme catalyses O-3-methylbutanoyl-(R)-carnitine(in) = O-3-methylbutanoyl-(R)-carnitine(out). The catalysed reaction is O-hexanoyl-(R)-carnitine(in) = O-hexanoyl-(R)-carnitine(out). It carries out the reaction L-histidyl-L-proline diketopiperazine(in) = L-histidyl-L-proline diketopiperazine(out). It catalyses the reaction (R)-salsolinol(in) = (R)-salsolinol(out). The enzyme catalyses prostaglandin F2alpha(out) = prostaglandin F2alpha(in). The catalysed reaction is prostaglandin E2(out) = prostaglandin E2(in). Phosphorylation of the transporter leads to changes in its substrate affinity, resulting in a regulation of the transport activity. In contrast with human ortholog, ASP uptake is stimulated by protein kinase A (PKA) and C (PKC) and endogenous tyrosine kinase activation. ASP affinity is induced by PKC-dependent phosphorylation. Inhibited by cGMP, most likely through a cGMP-binding protein that interacts with OCT1. Functionally, electrogenic voltage-dependent transporter that mediates the transport of a variety of organic cations such as endogenous bioactive amines, cationic drugs and xenobiotics. Functions as a pH- and Na(+)-independent, bidirectional transporter. Cation cellular uptake or release is driven by the electrochemical potential (i.e. membrane potential and concentration gradient) and substrate selectivity. Hydrophobicity is a major requirement for recognition in polyvalent substrates and inhibitors. Primarily expressed in the basolateral membrane of hepatocytes and proximal tubules and involved in the uptake and disposition of cationic compounds from the blood by hepatic and renal clearance. Most likely functions as an uptake carrier in enterocytes contributing to the intestinal excretion and elimination of organic cations from the systemic circulation. Transports endogenous monoamines such as N-1-methylnicotinamide (NMN), guanidine, neurotransmitters dopamine, serotonin, noradrenaline, adrenaline and histamine, and quaternary ammonium compound such as choline. Also transports natural polyamines such as spermidine, agmatine and putrescine at low affinity, but relatively high turnover. Involved in the hepatic uptake of vitamin B1/thiamine, hence regulating hepatic lipid and energy metabolism. Contributes to the influx and efflux of fatty acid carriers carnitines and acylcarnitines across the basolateral membrane of hepatocytes, from the liver to the systemic circulation and inversely and may be involved in regulating the systemic availability of hepatic acylcarnitines. Mediates the bidirectional transport of acetylcholine (ACh) at the apical membrane of ciliated cell in airway epithelium, thereby playing a role in luminal release of ACh from bronchial epithelium. Transports dopaminergic neuromodulators cyclo(his-pro) and salsolinol with lower efficency. Also capable of transporting non-amine endogenous compounds such as prostaglandin E2 (PGE2) and prostaglandin F2-alpha (PGF2-alpha). May contribute to the transport of cationic compounds in testis across the blood-testis-barrier. Also mediates the uptake of xenobiotics tributylmethylammonium (TBuMA), quinidine, N-methyl-quinine (NMQ), N-methyl-quinidine (NMQD) N-(4,4-azo-n-pentyl)-quinuclidine (APQ), azidoprocainamide methoiodide (AMP), N-(4,4-azo-n-pentyl)-21-deoxyajmalinium (APDA) and 4-(4-(dimethylamino)styryl)-N-methylpyridinium (ASP). Its function is as follows. Functional isoform capable of transporting TEA. The sequence is that of Solute carrier family 22 member 1 from Rattus norvegicus (Rat).